We begin with the raw amino-acid sequence, 795 residues long: Forkhead box protein P4 (795 aa).

Polar residues predominate over residues Met-1–Ala-25. The tract at residues Met-1 to Met-62 is disordered. Residues Ala-36–Asp-45 are compositionally biased toward low complexity. A phosphoserine mark is found at Ser-58 and Ser-92. Residue Lys-181 forms a Glycyl lysine isopeptide (Lys-Gly) (interchain with G-Cter in SUMO2) linkage. 2 disordered regions span residues Pro-233–Gln-252 and Thr-265–Gly-310. A compositionally biased stretch (basic and acidic residues) spans Ser-292 to Pro-303. The C2H2-type zinc finger occupies Gly-312–His-337. Residues Val-354–Leu-375 form a leucine-zipper region. Positions Pro-379–Lys-437 are disordered. Lys-383 is covalently cross-linked (Glycyl lysine isopeptide (Lys-Gly) (interchain with G-Cter in SUMO2)). Residues Arg-459–Leu-549 constitute a DNA-binding region (fork-head). Ser-546 is modified (phosphoserine). The interval Ala-589–Met-671 is disordered. Polar residues predominate over residues Ser-609 to Ile-627. A compositionally biased stretch (basic and acidic residues) spans Gln-628 to Pro-642.

As to quaternary structure, forms homodimers and heterodimers with FOXP1 and FOXP2. Dimerization is required for DNA-binding. As to expression, expressed in the adult heart, brain, spleen lung, liver, kidney and testes.

Its subcellular location is the nucleus. Transcriptional repressor that represses lung-specific expression. In Mus musculus (Mouse), this protein is Forkhead box protein P4.